Here is a 247-residue protein sequence, read N- to C-terminus: MNFEKVVERICDFIRGVVSSSGSTGVVLGLSGGVDSATVAYLCVRALGSERVFALIMPETGVTPEQDVEDAINVAESLGMEYKLIEINDIVRVFKEKAGEGSKIAEANLKPRIRMVLNYYHANSMNRLVAGTGNKSELMVGYFTKYGDGGVDFLPIGDLYKTEVFQLAAYLGVPRRIIEKKPSARLWPGQTDEEEMGISYAELDEILKLIEKGERRDDEKFRRVVQMVERSRHKREMPPVARVRDLL.

An ATP-binding site is contributed by 29-36; the sequence is GLSGGVDS. Aspartate 35 provides a ligand contact to Mg(2+). A deamido-NAD(+)-binding site is contributed by arginine 112. Threonine 132 serves as a coordination point for ATP. Residue glutamate 137 coordinates Mg(2+). Deamido-NAD(+)-binding residues include lysine 145 and aspartate 152. ATP contacts are provided by lysine 161 and serine 183. 233–234 contacts deamido-NAD(+); sequence HK.

The protein belongs to the NAD synthetase family. Homodimer.

It catalyses the reaction deamido-NAD(+) + NH4(+) + ATP = AMP + diphosphate + NAD(+) + H(+). The protein operates within cofactor biosynthesis; NAD(+) biosynthesis; NAD(+) from deamido-NAD(+) (ammonia route): step 1/1. Its function is as follows. Catalyzes the ATP-dependent amidation of deamido-NAD to form NAD. Uses ammonia as a nitrogen source. This chain is NH(3)-dependent NAD(+) synthetase, found in Archaeoglobus fulgidus (strain ATCC 49558 / DSM 4304 / JCM 9628 / NBRC 100126 / VC-16).